Consider the following 512-residue polypeptide: NAD(P)H-quinone oxidoreductase chain 4, chloroplastic (512 aa).

Transmembrane regions (helical) follow at residues 4 to 24 (VPWLTAIVLFPVSAGLLIPLL), 34 to 54 (WYALGICLLDLILMTYVFGCY), 87 to 107 (IGLILLTGFVTTLATLAAWPV), 111 to 131 (PKLFYFLMLAMYSGQLGLFAS), 134 to 154 (ILLFFVMWELELIPVYLLLSM), 167 to 187 (FILYTAGGSIFLLAGLLTASL), 208 to 228 (GLEILIYLGFLIAYAVKLPAF), 242 to 262 (HYSTCMLLAGILLKMGGYGFI), 274 to 294 (TVFAPWLVALGAYQIVYAALV), 308 to 328 (SSVSHMGFVLVGAGSLSDLGL), 330 to 350 (GAMLQMISHGLIGASLFFLAG), 374 to 396 (MFAMFTTCAMASLALPGMSGFVS), 417 to 437 (IITLIEAVGIILTPIYLLSMV), and 462 to 482 (VFVLGSLLLPMIGIGIYPNFA).

It belongs to the complex I subunit 4 family.

It localises to the plastid. The protein localises to the chloroplast thylakoid membrane. It carries out the reaction a plastoquinone + NADH + (n+1) H(+)(in) = a plastoquinol + NAD(+) + n H(+)(out). It catalyses the reaction a plastoquinone + NADPH + (n+1) H(+)(in) = a plastoquinol + NADP(+) + n H(+)(out). This Zygnema circumcarinatum (Green alga) protein is NAD(P)H-quinone oxidoreductase chain 4, chloroplastic.